Reading from the N-terminus, the 254-residue chain is Small ribosomal subunit protein uS2 (254 aa).

The protein belongs to the universal ribosomal protein uS2 family.

This Brucella ovis (strain ATCC 25840 / 63/290 / NCTC 10512) protein is Small ribosomal subunit protein uS2.